A 109-amino-acid polypeptide reads, in one-letter code: Anther-specific protein MZm3-3 (109 aa).

Positions 1-41 are cleaved as a signal peptide; that stretch reads MTATTTTAAGGGKVQPRGLPVALSLLLLLVLAAGLGGGAEA. Disulfide bonds link Cys-45-Cys-86, Cys-55-Cys-75, Cys-76-Cys-101, and Cys-88-Cys-108.

The protein belongs to the A9/FIL1 family. Tapetum of anthers.

Its subcellular location is the secreted. In Zea mays (Maize), this protein is Anther-specific protein MZm3-3.